The following is a 556-amino-acid chain: MEKGMIKLKSTVILVLFALLYLLPLNGRWLWSPDETRYAEISREMLQRGDWIVPHLLDVRYFEKPVAGYWLNNISQWLLGHTNFSVRFASVFSTALSALLVFWLALLLWKNRRTALLAATIYLTSLLVYGIGTYSVLDPMVTLWMTAALFSHVLIQRATLTRERLMAWGLMGLACGMGFMTKGFLALALPVISVLPVALAQKRIKELLLFGPLAIVVAVLLSAPWALAVHAREADYWHYFFWIEHIQRFAEDDAQHNAPFWYYLPVLIVGTFPWLALLPGALRSGWAERKSSPERFLLLCWMVMPLLFFSIAKGKLLTYILPCFAPLALLMAAWISGLAPAVRDRLLRINSWLNLAFGSVLALAVAALGLGIIMPHLYQPGEGLTIVSGVVCFVGWVAFAAVSLKKSRSWGYLVAGCPLFLALLVGGSIPASVVDSKNPQTFIRSHQPLLEDSRYVLSDEVGLAAGLAWELKRSDITLFKARGELNYGLNYADAADRFVDEGAFPAWLAEKRRSGNVALVLKIDRDTDEEYRNLPAPDQLKKSHRYVLLFYKQIAP.

A run of 11 helical transmembrane segments spans residues 5-25 (MIKLKSTVILVLFALLYLLPL), 88-108 (FASVFSTALSALLVFWLALLL), 116-136 (LLAATIYLTSLLVYGIGTYSV), 179-199 (FMTKGFLALALPVISVLPVAL), 207-227 (LLLFGPLAIVVAVLLSAPWAL), 258-278 (APFWYYLPVLIVGTFPWLALL), 296-316 (FLLLCWMVMPLLFFSIAKGKL), 319-339 (YILPCFAPLALLMAAWISGLA), 355-375 (LAFGSVLALAVAALGLGIIMP), 384-404 (LTIVSGVVCFVGWVAFAAVSL), and 410-430 (WGYLVAGCPLFLALLVGGSIP).

It belongs to the glycosyltransferase 83 family.

It localises to the cell inner membrane. The enzyme catalyses 4-amino-4-deoxy-alpha-L-arabinopyranosyl di-trans,octa-cis-undecaprenyl phosphate + lipid IVA = lipid IIA + di-trans,octa-cis-undecaprenyl phosphate.. It participates in lipopolysaccharide metabolism; 4-amino-4-deoxy-beta-L-arabinose-lipid A biosynthesis. In terms of biological role, catalyzes the transfer of the L-Ara4N moiety of the glycolipid undecaprenyl phosphate-alpha-L-Ara4N to lipid A. The modified arabinose is attached to lipid A and is required for resistance to polymyxin and cationic antimicrobial peptides. The chain is Undecaprenyl phosphate-alpha-4-amino-4-deoxy-L-arabinose arabinosyl transferase from Pectobacterium carotovorum subsp. carotovorum (strain PC1).